A 436-amino-acid chain; its full sequence is GTPase Obg (436 aa).

Residues 2 to 160 (SMFLDTAKIK…RELQLELKIL (159 aa)) form the Obg domain. The region spanning 161-338 (ADVGLVGFPS…LLDATAELLD (178 aa)) is the OBG-type G domain. Residues 167–174 (GFPSVGKS), 192–196 (FTTIV), 214–217 (DLPG), 284–287 (NKMD), and 319–321 (SGL) each bind GTP. 2 residues coordinate Mg(2+): Ser174 and Thr194. In terms of domain architecture, OCT spans 358 to 436 (GFDEEEKAFE…IGKFEFEFVD (79 aa)).

The protein belongs to the TRAFAC class OBG-HflX-like GTPase superfamily. OBG GTPase family. Monomer. It depends on Mg(2+) as a cofactor.

The protein localises to the cytoplasm. In terms of biological role, an essential GTPase which binds GTP, GDP and possibly (p)ppGpp with moderate affinity, with high nucleotide exchange rates and a fairly low GTP hydrolysis rate. Plays a role in control of the cell cycle, stress response, ribosome biogenesis and in those bacteria that undergo differentiation, in morphogenesis control. The protein is GTPase Obg of Streptococcus pneumoniae (strain CGSP14).